A 203-amino-acid chain; its full sequence is RNA pyrophosphohydrolase (203 aa).

In terms of domain architecture, Nudix hydrolase spans 6-149 (GFRPNVGIIL…KRNVYQMALT (144 aa)). Residues 38–59 (GGIKHGESPEQAMFRELHEEVG) carry the Nudix box motif. The segment at 170–203 (RAHRRDEGSEHNDHLDPTGPHDAGASVSEPKQAE) is disordered. A compositionally biased stretch (basic and acidic residues) spans 173–185 (RRDEGSEHNDHLD).

Belongs to the Nudix hydrolase family. RppH subfamily. The cofactor is a divalent metal cation.

Its function is as follows. Accelerates the degradation of transcripts by removing pyrophosphate from the 5'-end of triphosphorylated RNA, leading to a more labile monophosphorylated state that can stimulate subsequent ribonuclease cleavage. The polypeptide is RNA pyrophosphohydrolase (Leptothrix cholodnii (strain ATCC 51168 / LMG 8142 / SP-6) (Leptothrix discophora (strain SP-6))).